The chain runs to 315 residues: Tetraacyldisaccharide 4'-kinase (315 aa).

52–59 (TVGGTGKT) contacts ATP.

It belongs to the LpxK family.

The catalysed reaction is a lipid A disaccharide + ATP = a lipid IVA + ADP + H(+). The protein operates within glycolipid biosynthesis; lipid IV(A) biosynthesis; lipid IV(A) from (3R)-3-hydroxytetradecanoyl-[acyl-carrier-protein] and UDP-N-acetyl-alpha-D-glucosamine: step 6/6. Transfers the gamma-phosphate of ATP to the 4'-position of a tetraacyldisaccharide 1-phosphate intermediate (termed DS-1-P) to form tetraacyldisaccharide 1,4'-bis-phosphate (lipid IVA). This chain is Tetraacyldisaccharide 4'-kinase, found in Ruthia magnifica subsp. Calyptogena magnifica.